We begin with the raw amino-acid sequence, 480 residues long: Na(+)/H(+) antiporter NhaA (480 aa).

The next 11 membrane-spanning stretches (helical) occupy residues 34-54, 76-96, 113-133, 144-164, 174-194, 197-217, 223-243, 282-302, 312-332, 350-370, and 381-401; these read VGGV…NIPA, LSVA…VAGI, AVLP…VYTL, GWAV…AVIG, FLLT…AIFF, RINF…WLLL, GWYV…NSGV, GLAV…GGAL, LGVV…STWL, IFAV…IGEL, and EVKA…TVLL. The segment at 454 to 480 is disordered; it reads AAEKAAAARHGGAEVPGGAGEEDGRPA.

The protein belongs to the NhaA Na(+)/H(+) (TC 2.A.33) antiporter family.

Its subcellular location is the cell membrane. The enzyme catalyses Na(+)(in) + 2 H(+)(out) = Na(+)(out) + 2 H(+)(in). In terms of biological role, na(+)/H(+) antiporter that extrudes sodium in exchange for external protons. This is Na(+)/H(+) antiporter NhaA from Streptomyces antibioticus.